A 691-amino-acid chain; its full sequence is Lectin-domain containing receptor kinase VI.4 (691 aa).

Positions 1 to 19 (MGRAKSMVSLLLVLFLVRA) are cleaved as a signal peptide. The Extracellular portion of the chain corresponds to 20 to 306 (HVATTETTTE…AKKRGYNGKV (287 aa)). A legume-lectin like region spans residues 26 to 273 (TTTEFIFHGF…AHYVMGWSFA (248 aa)). A helical transmembrane segment spans residues 307 to 327 (IALIVALSTVISIMLVLLFLF). The Cytoplasmic segment spans residues 328 to 691 (MMYKKRMQQE…ISSTSLISGR (364 aa)). The 279-residue stretch at 363–641 (FKENRVVGTG…LNRDEDVPEI (279 aa)) folds into the Protein kinase domain. Residues 369–377 (VGTGGFGIV) and Lys-392 each bind ATP. Residue Asp-491 is the Proton acceptor of the active site.

This sequence in the C-terminal section; belongs to the protein kinase superfamily. Ser/Thr protein kinase family. The protein in the N-terminal section; belongs to the leguminous lectin family.

It is found in the cell membrane. The enzyme catalyses L-seryl-[protein] + ATP = O-phospho-L-seryl-[protein] + ADP + H(+). The catalysed reaction is L-threonyl-[protein] + ATP = O-phospho-L-threonyl-[protein] + ADP + H(+). Involved in negative regulation of abscisic acid response in seed germination. This chain is Lectin-domain containing receptor kinase VI.4 (LECRK64), found in Arabidopsis thaliana (Mouse-ear cress).